Here is a 761-residue protein sequence, read N- to C-terminus: Phosphoribosylformylglycinamidine synthase subunit PurL (761 aa).

Residue His58 is part of the active site. ATP is bound by residues Tyr61 and Lys105. Glu107 lines the Mg(2+) pocket. Residues 108 to 111 (SHNH) and Arg130 each bind substrate. His109 (proton acceptor) is an active-site residue. Asp131 lines the Mg(2+) pocket. Gln259 contributes to the substrate binding site. Asp287 is a binding site for Mg(2+). Residue 331 to 333 (ESQ) participates in substrate binding. Residues Asn519 and Gly556 each coordinate ATP. Residue Asn557 participates in Mg(2+) binding. A substrate-binding site is contributed by Ser559.

Belongs to the FGAMS family. As to quaternary structure, monomer. Part of the FGAM synthase complex composed of 1 PurL, 1 PurQ and 2 PurS subunits.

The protein resides in the cytoplasm. It carries out the reaction N(2)-formyl-N(1)-(5-phospho-beta-D-ribosyl)glycinamide + L-glutamine + ATP + H2O = 2-formamido-N(1)-(5-O-phospho-beta-D-ribosyl)acetamidine + L-glutamate + ADP + phosphate + H(+). The protein operates within purine metabolism; IMP biosynthesis via de novo pathway; 5-amino-1-(5-phospho-D-ribosyl)imidazole from N(2)-formyl-N(1)-(5-phospho-D-ribosyl)glycinamide: step 1/2. In terms of biological role, part of the phosphoribosylformylglycinamidine synthase complex involved in the purines biosynthetic pathway. Catalyzes the ATP-dependent conversion of formylglycinamide ribonucleotide (FGAR) and glutamine to yield formylglycinamidine ribonucleotide (FGAM) and glutamate. The FGAM synthase complex is composed of three subunits. PurQ produces an ammonia molecule by converting glutamine to glutamate. PurL transfers the ammonia molecule to FGAR to form FGAM in an ATP-dependent manner. PurS interacts with PurQ and PurL and is thought to assist in the transfer of the ammonia molecule from PurQ to PurL. This is Phosphoribosylformylglycinamidine synthase subunit PurL from Rhodococcus jostii (strain RHA1).